Here is a 345-residue protein sequence, read N- to C-terminus: MQRLVEVESVSFEEDNNEISLRPSNWDDYIGQEKIKKNLRVFIDASKKRKEALDHILFYGPPGLGKTTLSYLISNEMNTNIKVTAGPMIEKSGDLAAILTNLEEGDILFIDEIHRLSPAVEEILYPAMEDYRLDIIIGSGPAAQTVKIDLPRFTLIGATTRAGMLSNPLRERFGMHFRMQFYTEIELAKIIQKASLKLGKNCEDDASLEISKRSRGTPRVALRLLRRVRDFSEVENEKSIHLQRCKYALDELGVNESGFDEMDINLLELLISNRGKPMGLSTIAAALSEDEGTIEDAIEPYLLANGYIERTARGRVASVKTYEMFRLSYPTSLKLEDDLTQGKLF.

The interval 1 to 182 (MQRLVEVESV…FGMHFRMQFY (182 aa)) is large ATPase domain (RuvB-L). ATP contacts are provided by residues Leu-21, Arg-22, Gly-63, Lys-66, Thr-67, Thr-68, 129 to 131 (EDY), Arg-172, Tyr-182, and Arg-219. Thr-67 is a binding site for Mg(2+). The segment at 183-253 (TEIELAKIIQ…RCKYALDELG (71 aa)) is small ATPAse domain (RuvB-S). Residues 256-345 (ESGFDEMDIN…EDDLTQGKLF (90 aa)) are head domain (RuvB-H). DNA contacts are provided by Arg-310 and Arg-315.

It belongs to the RuvB family. As to quaternary structure, homohexamer. Forms an RuvA(8)-RuvB(12)-Holliday junction (HJ) complex. HJ DNA is sandwiched between 2 RuvA tetramers; dsDNA enters through RuvA and exits via RuvB. An RuvB hexamer assembles on each DNA strand where it exits the tetramer. Each RuvB hexamer is contacted by two RuvA subunits (via domain III) on 2 adjacent RuvB subunits; this complex drives branch migration. In the full resolvosome a probable DNA-RuvA(4)-RuvB(12)-RuvC(2) complex forms which resolves the HJ.

It localises to the cytoplasm. It carries out the reaction ATP + H2O = ADP + phosphate + H(+). Functionally, the RuvA-RuvB-RuvC complex processes Holliday junction (HJ) DNA during genetic recombination and DNA repair, while the RuvA-RuvB complex plays an important role in the rescue of blocked DNA replication forks via replication fork reversal (RFR). RuvA specifically binds to HJ cruciform DNA, conferring on it an open structure. The RuvB hexamer acts as an ATP-dependent pump, pulling dsDNA into and through the RuvAB complex. RuvB forms 2 homohexamers on either side of HJ DNA bound by 1 or 2 RuvA tetramers; 4 subunits per hexamer contact DNA at a time. Coordinated motions by a converter formed by DNA-disengaged RuvB subunits stimulates ATP hydrolysis and nucleotide exchange. Immobilization of the converter enables RuvB to convert the ATP-contained energy into a lever motion, pulling 2 nucleotides of DNA out of the RuvA tetramer per ATP hydrolyzed, thus driving DNA branch migration. The RuvB motors rotate together with the DNA substrate, which together with the progressing nucleotide cycle form the mechanistic basis for DNA recombination by continuous HJ branch migration. Branch migration allows RuvC to scan DNA until it finds its consensus sequence, where it cleaves and resolves cruciform DNA. The protein is Holliday junction branch migration complex subunit RuvB of Aliarcobacter butzleri (strain RM4018) (Arcobacter butzleri).